Here is a 489-residue protein sequence, read N- to C-terminus: Endothelial zinc finger protein induced by tumor necrosis factor alpha (489 aa).

The segment covering 1–15 (MKELDPKNDISEDKL) has biased composition (basic and acidic residues). 2 disordered regions span residues 1–61 (MKEL…PLGI) and 98–122 (EKGACPPVRRGKNFSSTSDLSKPPM). 13 consecutive C2H2-type zinc fingers follow at residues 130 to 152 (YDCSECGKAFSRSSSLIKHQRIH), 158 to 180 (FECDTCGKHFIERSSLTIHQRVH), 186 to 208 (YACGDCGKAFSQRMNLTVHQRTH), 214 to 236 (YVCDVCGKAFRKTSSLTQHERIH), 242 to 264 (YACGDCGKAFSQNMHLIVHQRTH), 270 to 292 (YVCPECGRAFSQNMHLTEHQRTH), 298 to 320 (YACKECGKAFNKSSSLTLHQRNH), 326 to 348 (YVCGECGKAFSQSSYLIQHQRFH), 354 to 376 (FECSECGKAFSKNSSLTQHQRIH), 382 to 404 (YECYICKKHFTGRSSLIVHQIVH), 410 to 432 (YVCGECGKAFSQSAYLIEHQRIH), 438 to 460 (YRCGQCGKSFIKNSSLTVHQRIH), and 466 to 488 (YRCGECGKTFSRNTNLTRHLRIH).

Belongs to the krueppel C2H2-type zinc-finger protein family. In terms of tissue distribution, highly expressed in placenta, followed by brain, testis, pancreas, heart, small intestine, muscle, uterus, prostate and peripheral blood leukocytes. Not detected in liver, lung, colon, stomach, salivary and thyroid gland.

It is found in the nucleus. In terms of biological role, may be involved in transcriptional regulation. This chain is Endothelial zinc finger protein induced by tumor necrosis factor alpha (ZNF71), found in Homo sapiens (Human).